The sequence spans 359 residues: UPF0284 protein MTH_1426 (359 aa).

Belongs to the UPF0284 family.

This chain is UPF0284 protein MTH_1426, found in Methanothermobacter thermautotrophicus (strain ATCC 29096 / DSM 1053 / JCM 10044 / NBRC 100330 / Delta H) (Methanobacterium thermoautotrophicum).